The chain runs to 88 residues: MQKDVEYIELLDEQGEQIKFKVITYFQIDEINGEYVVVTPAENDECDEAFVLKVISDEDGNETLVSIEDEKEFDLVEEAYNLVMSEQD.

Belongs to the UPF0473 family.

The sequence is that of UPF0473 protein CLL_A1177 from Clostridium botulinum (strain Eklund 17B / Type B).